The sequence spans 153 residues: Ubiquitin-conjugating enzyme E2-18 kDa (153 aa).

The region spanning 2–149 (AATRRLTREL…AEEFTKKNAE (148 aa)) is the UBC core domain. Cys-86 acts as the Glycyl thioester intermediate in catalysis.

Belongs to the ubiquitin-conjugating enzyme family.

The catalysed reaction is S-ubiquitinyl-[E1 ubiquitin-activating enzyme]-L-cysteine + [E2 ubiquitin-conjugating enzyme]-L-cysteine = [E1 ubiquitin-activating enzyme]-L-cysteine + S-ubiquitinyl-[E2 ubiquitin-conjugating enzyme]-L-cysteine.. It participates in protein modification; protein ubiquitination. Functionally, catalyzes the covalent attachment of ubiquitin to other proteins. The protein is Ubiquitin-conjugating enzyme E2-18 kDa (Ubc84D) of Drosophila melanogaster (Fruit fly).